The primary structure comprises 45 residues: Metallothionein-like protein 1C (45 aa).

Belongs to the metallothionein superfamily. Type 15 family. Widely expressed at low levels.

Metallothioneins have a high content of cysteine residues that bind various heavy metals. Confers tolerance to cadmium (Cd) and plays a role in Cd and zinc (Zn) homeostasis. In Arabidopsis thaliana (Mouse-ear cress), this protein is Metallothionein-like protein 1C (MT1C).